The primary structure comprises 221 residues: MLRATFTGSSYVGVFARAIDDLLLVRPDVDEELADALGEELGAEPLLTTVGGANTVGSLATGNENGVLVSARATEREQSRIAEAADCEVGELPGEINAAGNVVLANDYGAYVHPDLPRESIVTIRETLGVPVVRGDLGDVRTVGTAAVANNTGVLCHPKSTESELQAVEEALDVRADLGTINYGAPLIGSGLIATDEGYVVGEDTTGPELGRIEETLGFID.

This sequence belongs to the eIF-6 family.

Binds to the 50S ribosomal subunit and prevents its association with the 30S ribosomal subunit to form the 70S initiation complex. In Halorubrum lacusprofundi (strain ATCC 49239 / DSM 5036 / JCM 8891 / ACAM 34), this protein is Translation initiation factor 6.